We begin with the raw amino-acid sequence, 504 residues long: Ribosomal protein uS12 methylthiotransferase RimO (504 aa).

One can recognise an MTTase N-terminal domain in the interval 21 to 131; it reads KRVGFISLGC…VMGHVRELLP (111 aa). 6 residues coordinate [4Fe-4S] cluster: C30, C66, C95, C186, C190, and C193. In terms of domain architecture, Radical SAM core spans 172-408; it reads LTPRHYAYVK…MEVAQRISTE (237 aa). Positions 411-487 constitute a TRAM domain; sequence SEKVGRVMDV…EYDLFGEVIE (77 aa).

The protein belongs to the methylthiotransferase family. RimO subfamily. It depends on [4Fe-4S] cluster as a cofactor.

It is found in the cytoplasm. It catalyses the reaction L-aspartate(89)-[ribosomal protein uS12]-hydrogen + (sulfur carrier)-SH + AH2 + 2 S-adenosyl-L-methionine = 3-methylsulfanyl-L-aspartate(89)-[ribosomal protein uS12]-hydrogen + (sulfur carrier)-H + 5'-deoxyadenosine + L-methionine + A + S-adenosyl-L-homocysteine + 2 H(+). In terms of biological role, catalyzes the methylthiolation of an aspartic acid residue of ribosomal protein uS12. The polypeptide is Ribosomal protein uS12 methylthiotransferase RimO (Deinococcus radiodurans (strain ATCC 13939 / DSM 20539 / JCM 16871 / CCUG 27074 / LMG 4051 / NBRC 15346 / NCIMB 9279 / VKM B-1422 / R1)).